Reading from the N-terminus, the 141-residue chain is Large ribosomal subunit protein uL11B/uL11C (141 aa).

This sequence belongs to the universal ribosomal protein uL11 family. In terms of assembly, part of the ribosomal stalk of the 50S ribosomal subunit. Interacts with L10 and the large rRNA to form the base of the stalk. L10 forms an elongated spine to which L12 dimers bind in a sequential fashion forming a multimeric L10(L12)X complex. One or more lysine residues are methylated.

Forms part of the ribosomal stalk which helps the ribosome interact with GTP-bound translation factors. This chain is Large ribosomal subunit protein uL11B/uL11C, found in Bacillus cereus (strain ATCC 14579 / DSM 31 / CCUG 7414 / JCM 2152 / NBRC 15305 / NCIMB 9373 / NCTC 2599 / NRRL B-3711).